The sequence spans 66 residues: MSQEKLKSKVEQASGSLKEGAGKLTGDKELEAKGFVEKTIAKGKELADDAKDAVEEAVDVVKEKLK.

Basic and acidic residues predominate over residues 1 to 10 (MSQEKLKSKV). The tract at residues 1 to 23 (MSQEKLKSKVEQASGSLKEGAGK) is disordered.

Belongs to the UPF0337 (CsbD) family.

In Streptococcus agalactiae serotype V (strain ATCC BAA-611 / 2603 V/R), this protein is UPF0337 protein SAG0606.